The chain runs to 906 residues: Inter-alpha-trypsin inhibitor heavy chain H1 (906 aa).

Residues 1–22 form the signal peptide; it reads MGLRGLLCVCLVSLLALQAVAA. Residues 23-29 constitute a propeptide that is removed on maturation; sequence QGSPTRN. Residues 32–161 form the VIT domain; that stretch reads GGKKRMAVDA…KATFRLTYEE (130 aa). A glycan (S-linked (Hex...) cysteine) is linked at Cys-55. At Ser-124 the chain carries Phosphoserine. One can recognise a VWFA domain in the interval 287–470; the sequence is NVVFVIDISS…QQLQGFYEQV (184 aa). A phosphothreonine mark is found at Thr-397 and Thr-402. N-linked (GlcNAc...) asparagine glycosylation is present at Asn-583. A glycan (O-linked (GalNAc...) serine) is linked at Ser-643. Residue Thr-648 is glycosylated (O-linked (GalNAc...) threonine). Residue Asp-667 is modified to Aspartate 1-(chondroitin 4-sulfate)-ester. Positions 668–906 are excised as a propeptide; the sequence is PHFLIHVPQK…HTDYIVPDIF (239 aa). The N-linked (GlcNAc...) asparagine glycan is linked to Asn-745.

This sequence belongs to the ITIH family. I-alpha-I plasma protease inhibitors are assembled from one or two heavy chains (HC) and one light chain, bikunin. Inter-alpha-inhibitor (I-alpha-I) is composed of ITIH1/HC1, ITIH2/HC2 and bikunin. Interacts with TNFAIP6 (via Link and CUB domains). Post-translationally, heavy chains are linked to bikunin via chondroitin 4-sulfate esterified to the alpha-carboxyl of the C-terminal aspartate after propeptide cleavage. The S-linked glycan is composed of two 6-carbon sugars, possibly Glc or Gal.

The protein localises to the secreted. Functionally, may act as a carrier of hyaluronan in serum or as a binding protein between hyaluronan and other matrix protein, including those on cell surfaces in tissues to regulate the localization, synthesis and degradation of hyaluronan which are essential to cells undergoing biological processes. The sequence is that of Inter-alpha-trypsin inhibitor heavy chain H1 (ITIH1) from Bos taurus (Bovine).